Consider the following 429-residue polypeptide: Protein ABERRANT PANICLE ORGANIZATION 1 (429 aa).

Pro residues predominate over residues 1 to 11 (MMNPRRLPPLP). Residues 1 to 21 (MMNPRRLPPLPSSTSSASAAD) are disordered. In terms of domain architecture, F-box spans 25 to 71 (PRVWRRLPQPLVDRVLACLPTPSFLRLRAACRRFYHLLFSSPFLHSH). 2 consecutive transmembrane segments (helical) span residues 72-92 (LLLS…GHLL) and 112-132 (VAGG…LAFL). Kelch repeat units lie at residues 229–277 (MAFA…ELGG), 284–339 (RVAL…AEGG), and 350–397 (YVVL…GAAG).

As to quaternary structure, part of a putative SCF (ASK/Cullin/F-box) ubiquitin ligase complex. Interacts with FL/APO2. In terms of tissue distribution, expressed in seedlings, roots, leaves, shoot apical meristem (SAM), developing panicles, and, at lower levels, in developing seeds.

Its subcellular location is the membrane. It participates in protein modification; protein ubiquitination. Functionally, component of SCF(ASK-cullin-F-box) E3 ubiquitin ligase complexes, which may mediate the ubiquitination and subsequent proteasomal degradation of target proteins. Together with FL/APO2, involved in the temporal regulation of meristem identity during both vegetative and reproductive developments in an APO2-dependent manner. Promotes spikelet formation by suppressing the precocious conversion of inflorescence meristems to spikelet meristems, probably via a positive regulation of class-C floral homeotic genes, but not of class-B genes, and through the control of cell proliferation in meristems. Mediates culm development and strength/diameter enhancement at internodes. Required for the regulation of the plastochron, floral organ identity, and floral determinacy. Controls the number of primary rachis branches (PRBs). May trigger the formation of vascular bundle systems which, consequently, promote carbohydrate translocation to panicles. Involved in ozone-induced grain yield regulation. The polypeptide is Protein ABERRANT PANICLE ORGANIZATION 1 (Oryza sativa subsp. indica (Rice)).